The following is a 185-amino-acid chain: Large ribosomal subunit protein uL5 (185 aa).

This sequence belongs to the universal ribosomal protein uL5 family. Part of the 50S ribosomal subunit; part of the 5S rRNA/L5/L18/L25 subcomplex. Contacts the 5S rRNA and the P site tRNA. Forms a bridge to the 30S subunit in the 70S ribosome.

In terms of biological role, this is one of the proteins that bind and probably mediate the attachment of the 5S RNA into the large ribosomal subunit, where it forms part of the central protuberance. In the 70S ribosome it contacts protein S13 of the 30S subunit (bridge B1b), connecting the 2 subunits; this bridge is implicated in subunit movement. Contacts the P site tRNA; the 5S rRNA and some of its associated proteins might help stabilize positioning of ribosome-bound tRNAs. The protein is Large ribosomal subunit protein uL5 of Bartonella bacilliformis (strain ATCC 35685 / KC583 / Herrer 020/F12,63).